The sequence spans 572 residues: Probable D-xylulose kinase A (572 aa).

The substrate site is built by H95, R166, D282, and N283. Residues W365, 470 to 471 (GG), and N474 contribute to the ATP site.

It belongs to the FGGY kinase family.

The protein resides in the cytoplasm. It catalyses the reaction D-xylulose + ATP = D-xylulose 5-phosphate + ADP + H(+). In terms of biological role, highly specific D-xylulose kinase which participates in the catabolism of xylose. Xylose is a major component of hemicelluloses such as xylan. Most fungi utilize D-xylose via three enzymatic reactions, xylose reductase (XR), xylitol dehydrogenase (XDH), and xylulokinase, to form xylulose 5-phosphate, which enters pentose phosphate pathway. This Aspergillus oryzae (strain ATCC 42149 / RIB 40) (Yellow koji mold) protein is Probable D-xylulose kinase A (xkiA).